We begin with the raw amino-acid sequence, 856 residues long: Centrosomal protein of 97 kDa (856 aa).

LRR repeat units lie at residues 37–58, 59–80, 81–102, 103–124, 125–146, 147–168, 171–192, and 196–205; these read DVHT…EKCK, QLIQ…AKLT, QLRV…KDLV, HLEW…NSCT, ALQH…SKLI, SLKT…PAYL, NLSI…SFLA, and ELEQLSIMNN. An LRRCT domain is found at 211 to 249; that stretch reads TPSIPGFDYRPFIVSWCLNLRVLDGYVISQKESLKAEWL. The tract at residues 300 to 742 is CCP110-binding; that stretch reads HQRQLMSQSQ…KCVKDRDSEA (443 aa). Phosphoserine is present on residues Ser-308 and Ser-410. Positions 430–451 are disordered; sequence DDGADEFTKGLENQDEDKDKEK. Ser-497 bears the Phosphoserine mark. Positions 498-513 are enriched in polar residues; the sequence is LTSLPESAGHSASRTE. Positions 498-525 are disordered; that stretch reads LTSLPESAGHSASRTEANSEEAMSPATS. Ser-521 bears the Phosphoserine mark. At Thr-534 the chain carries Phosphothreonine. The IQ domain occupies 550–579; sequence LNAAATKLQACWRGFYTRNYNQQAKGVRYE. The interaction with MPHOSPH9 stretch occupies residues 579 to 853; it reads EIRLRRMQEH…FQGLHVGVTV (275 aa). Disordered stretches follow at residues 646–672 and 737–840; these read PPIS…DQSS and DRDS…PPEC. The span at 737 to 752 shows a compositional bias: basic and acidic residues; sequence DRDSEATAEEHSDCSR. The span at 753-773 shows a compositional bias: polar residues; sequence ESSASEQDNTLLQQYLTSVQQ. Position 755 is a phosphoserine (Ser-755). The span at 776–787 shows a compositional bias: acidic residues; that stretch reads DAAEAADSDDVA. The span at 799 to 811 shows a compositional bias: basic and acidic residues; sequence ERFDASSDSETHR. A compositionally biased stretch (polar residues) spans 812 to 833; that stretch reads VASTSQDEISQTPENCQLNEEA.

As to quaternary structure, interacts with CALM1, CEP76, KIF24 and TALPID3. Interacts with CCP110. ENKD1 competes with CEP97 for binding to CCP110, destabilizing the interaction between CP110 and CEP97 which promotes the removal of CCP110 and CEP97 from the mother centriole and allows the initiation of ciliogenesis. Via its interaction with CCP110, may indirectly interact with HERC2 and NEURL4. Interacts with MPHOSPH9.

Its subcellular location is the cytoplasm. The protein localises to the cytoskeleton. It localises to the microtubule organizing center. It is found in the centrosome. The protein resides in the centriole. Its function is as follows. Acts as a key negative regulator of ciliogenesis in collaboration with CCP110 by capping the mother centriole thereby preventing cilia formation. Required for recruitment of CCP110 to the centrosome. This Mus musculus (Mouse) protein is Centrosomal protein of 97 kDa (Cep97).